The primary structure comprises 168 residues: Lipid transfer protein EARLI 1 (168 aa).

Positions 1 to 25 (MASKNSASIALFFALNIIFFTLTAA) are cleaved as a signal peptide. Positions 32 to 81 (PSPKHKPVPSPKPKPVPSPKPKPVPSPSVPSPSVPSPNPRPVTPPRTPGS) are disordered. One copy of the A-1 repeat lies at 34 to 41 (PKHKPVPS). Residues 34–57 (PKHKPVPSPKPKPVPSPKPKPVPS) are 3 X 8 AA repeats A of P-K-[HP]-K-P-V-P-S. The segment covering 39–78 (VPSPKPKPVPSPKPKPVPSPSVPSPSVPSPNPRPVTPPRT) has biased composition (pro residues). An A-2 repeat occupies 42–49 (PKPKPVPS). The A-3 repeat unit spans residues 50–57 (PKPKPVPS). Residues 58-62 (PSVPS) form a B-1 repeat. Residues 58-67 (PSVPSPSVPS) form a 2 X 58 AA tandem repeats B of P-S-V-P-S region. A B-2 repeat occupies 63–67 (PSVPS).

This sequence belongs to the plant LTP family. PEARLI1 subfamily. In terms of tissue distribution, mostly expressed in aerial part of seedlings, and, to a lower extent, in roots. Higher basal levels in early-flowering ecotypes.

The protein resides in the secreted. It localises to the cell wall. Functionally, probable lipid transfer protein (LTP). May improve freezing survival. Seems to control the flowering process and lignin synthesis. Has an auxiliary role for germinability and early seedling development under low temperature and salt stress conditions, probably in an abscisic acid- (ABA) dependent manner. Confers resistance to Botrytis cinerea and exhibits anti-fungal activity, at least against S.cerevisiae, B.cinerea and Fusarium oxysporum, probably by increasing their membrane permeability. This chain is Lipid transfer protein EARLI 1 (EARLI1), found in Arabidopsis thaliana (Mouse-ear cress).